A 373-amino-acid chain; its full sequence is Alcohol dehydrogenase class-3 (373 aa).

Ala1 carries the N-acetylalanine modification. Positions 44, 66, 96, 99, 102, 110, and 173 each coordinate Zn(2+).

The protein belongs to the zinc-containing alcohol dehydrogenase family. Class-III subfamily. Homodimer. It depends on Zn(2+) as a cofactor.

It is found in the cytoplasm. It catalyses the reaction a primary alcohol + NAD(+) = an aldehyde + NADH + H(+). It carries out the reaction a secondary alcohol + NAD(+) = a ketone + NADH + H(+). The catalysed reaction is S-(hydroxymethyl)glutathione + NADP(+) = S-formylglutathione + NADPH + H(+). The enzyme catalyses S-(hydroxymethyl)glutathione + NAD(+) = S-formylglutathione + NADH + H(+). It catalyses the reaction S-nitrosoglutathione + NADH + H(+) = S-(hydroxysulfenamide)glutathione + NAD(+). Its function is as follows. Class-III ADH is remarkably ineffective in oxidizing ethanol, but it readily catalyzes the oxidation of long-chain primary alcohols and the oxidation of S-(hydroxymethyl) glutathione. Also acts as a S-nitroso-glutathione reductase by catalyzing the NADH-dependent reduction of S-nitrosoglutathione, thereby regulating protein S-nitrosylation. The sequence is that of Alcohol dehydrogenase class-3 from Saara hardwickii (Indian spiny-tailed lizard).